The primary structure comprises 188 residues: MDIDPYKEFGSSYQLLNFLPLDFFPDLNALVDTATALYEEELTGREHCSPHHTAIRQALVCWDELTKLIAWMSSNITSEQVRTIIVNHVNDTWGLKVRQSLWFHLSCLTFGQHTVQEFLVSFGVWIRTPAPYRPPNAPILSTLPEHTVIRRRGGARASRSPRRRTPSPRRRRSQSPRRRRSQSPSANC.

Residues 150-181 show a composition bias toward basic residues; it reads RRRGGARASRSPRRRTPSPRRRRSQSPRRRRS. The disordered stretch occupies residues 150–188; sequence RRRGGARASRSPRRRTPSPRRRRSQSPRRRRSQSPSANC. A phosphoserine; by host mark is found at Ser160, Ser167, and Ser175. A 1; half-length repeat occupies 160 to 166; the sequence is SPRRRTP. A 3 X 8 AA repeats of S-P-R-R-R-[PR]-S-Q region spans residues 160–182; the sequence is SPRRRTPSPRRRRSQSPRRRRSQ. The short motif at 163–180 is the Bipartite nuclear localization signal element; sequence RRTPSPRRRRSQSPRRRR. A run of 2 repeats spans residues 167–174 and 175–182. The interval 182–188 is RNA binding; it reads QSPSANC.

The protein belongs to the orthohepadnavirus core antigen family. Homodimerizes, then multimerizes. Interacts with cytosol exposed regions of viral L glycoprotein present in the reticulum-to-Golgi compartment. Interacts with human FLNB. Phosphorylated form interacts with host importin alpha; this interaction depends on the exposure of the NLS, which itself depends upon genome maturation and/or phosphorylation of the capsid protein. Interacts with host NUP153. Phosphorylated by host SRPK1, SRPK2, and maybe protein kinase C or GAPDH. Phosphorylation is critical for pregenomic RNA packaging. Protein kinase C phosphorylation is stimulated by HBx protein and may play a role in transport of the viral genome to the nucleus at the late step during the viral replication cycle.

The protein resides in the virion. It localises to the host cytoplasm. In terms of biological role, self assembles to form an icosahedral capsid. Most capsids appear to be large particles with an icosahedral symmetry of T=4 and consist of 240 copies of capsid protein, though a fraction forms smaller T=3 particles consisting of 180 capsid proteins. Entering capsids are transported along microtubules to the nucleus. Phosphorylation of the capsid is thought to induce exposure of nuclear localization signal in the C-terminal portion of the capsid protein that allows binding to the nuclear pore complex via the importin (karyopherin-) alpha and beta. Capsids are imported in intact form through the nuclear pore into the nuclear basket, where it probably binds NUP153. Only capsids that contain the mature viral genome can release the viral DNA and capsid protein into the nucleoplasm. Immature capsids get stuck in the basket. Capsids encapsulate the pre-genomic RNA and the P protein. Pre-genomic RNA is reverse-transcribed into DNA while the capsid is still in the cytoplasm. The capsid can then either be directed to the nucleus, providing more genomes for transcription, or bud through the endoplasmic reticulum to provide new virions. The sequence is that of Capsid protein from Marmota monax (Woodchuck).